Reading from the N-terminus, the 303-residue chain is Geranylgeranyl pyrophosphate synthase (303 aa).

Residues Lys30, Arg33, and His62 each contribute to the isopentenyl diphosphate site. The Mg(2+) site is built by Asp69 and Asp73. Arg78 is a dimethylallyl diphosphate binding site. Arg79 is an isopentenyl diphosphate binding site. Residues Lys156, Thr157, Gln190, Lys207, and Lys217 each coordinate dimethylallyl diphosphate.

This sequence belongs to the FPP/GGPP synthase family. It depends on Mg(2+) as a cofactor.

It localises to the cytoplasm. The catalysed reaction is isopentenyl diphosphate + dimethylallyl diphosphate = (2E)-geranyl diphosphate + diphosphate. The enzyme catalyses isopentenyl diphosphate + (2E)-geranyl diphosphate = (2E,6E)-farnesyl diphosphate + diphosphate. It carries out the reaction isopentenyl diphosphate + (2E,6E)-farnesyl diphosphate = (2E,6E,10E)-geranylgeranyl diphosphate + diphosphate. It functions in the pathway isoprenoid biosynthesis; farnesyl diphosphate biosynthesis; farnesyl diphosphate from geranyl diphosphate and isopentenyl diphosphate: step 1/1. It participates in isoprenoid biosynthesis; geranyl diphosphate biosynthesis; geranyl diphosphate from dimethylallyl diphosphate and isopentenyl diphosphate: step 1/1. Its pathway is isoprenoid biosynthesis; geranylgeranyl diphosphate biosynthesis; geranylgeranyl diphosphate from farnesyl diphosphate and isopentenyl diphosphate: step 1/1. Its function is as follows. Catalyzes the trans-addition of the three molecules of IPP onto DMAPP to form geranylgeranyl pyrophosphate. In Mucor circinelloides f. lusitanicus (Mucor racemosus var. lusitanicus), this protein is Geranylgeranyl pyrophosphate synthase.